We begin with the raw amino-acid sequence, 272 residues long: Shikimate dehydrogenase (NADP(+)) (272 aa).

Shikimate-binding positions include 14 to 16 and Thr-61; that span reads SLS. Lys-65 acts as the Proton acceptor in catalysis. Asp-102 is a binding site for shikimate. NADP(+) contacts are provided by residues 127–131, 151–156, and Leu-215; these read GAGGA and NRTPSK. Tyr-217 contributes to the shikimate binding site. Gly-239 is an NADP(+) binding site.

It belongs to the shikimate dehydrogenase family. In terms of assembly, homodimer.

The enzyme catalyses shikimate + NADP(+) = 3-dehydroshikimate + NADPH + H(+). It functions in the pathway metabolic intermediate biosynthesis; chorismate biosynthesis; chorismate from D-erythrose 4-phosphate and phosphoenolpyruvate: step 4/7. Its function is as follows. Involved in the biosynthesis of the chorismate, which leads to the biosynthesis of aromatic amino acids. Catalyzes the reversible NADPH linked reduction of 3-dehydroshikimate (DHSA) to yield shikimate (SA). The protein is Shikimate dehydrogenase (NADP(+)) of Coxiella burnetii (strain Dugway 5J108-111).